We begin with the raw amino-acid sequence, 526 residues long: ATP synthase subunit alpha (526 aa).

171–178 (GDRQVGKT) contacts ATP.

The protein belongs to the ATPase alpha/beta chains family. As to quaternary structure, F-type ATPases have 2 components, CF(1) - the catalytic core - and CF(0) - the membrane proton channel. CF(1) has five subunits: alpha(3), beta(3), gamma(1), delta(1), epsilon(1). CF(0) has three main subunits: a(1), b(2) and c(9-12). The alpha and beta chains form an alternating ring which encloses part of the gamma chain. CF(1) is attached to CF(0) by a central stalk formed by the gamma and epsilon chains, while a peripheral stalk is formed by the delta and b chains.

It localises to the cell inner membrane. It catalyses the reaction ATP + H2O + 4 H(+)(in) = ADP + phosphate + 5 H(+)(out). Its function is as follows. Produces ATP from ADP in the presence of a proton gradient across the membrane. The alpha chain is a regulatory subunit. This is ATP synthase subunit alpha from Azobacteroides pseudotrichonymphae genomovar. CFP2.